The following is a 316-amino-acid chain: Methionyl-tRNA formyltransferase (316 aa).

Position 110–113 (110–113 (SLLP)) interacts with (6S)-5,6,7,8-tetrahydrofolate.

It belongs to the Fmt family.

The enzyme catalyses L-methionyl-tRNA(fMet) + (6R)-10-formyltetrahydrofolate = N-formyl-L-methionyl-tRNA(fMet) + (6S)-5,6,7,8-tetrahydrofolate + H(+). Attaches a formyl group to the free amino group of methionyl-tRNA(fMet). The formyl group appears to play a dual role in the initiator identity of N-formylmethionyl-tRNA by promoting its recognition by IF2 and preventing the misappropriation of this tRNA by the elongation apparatus. This is Methionyl-tRNA formyltransferase from Bacillus licheniformis (strain ATCC 14580 / DSM 13 / JCM 2505 / CCUG 7422 / NBRC 12200 / NCIMB 9375 / NCTC 10341 / NRRL NRS-1264 / Gibson 46).